Consider the following 433-residue polypeptide: Glutamate-1-semialdehyde 2,1-aminomutase (433 aa).

Residue K272 is modified to N6-(pyridoxal phosphate)lysine.

Belongs to the class-III pyridoxal-phosphate-dependent aminotransferase family. HemL subfamily. In terms of assembly, homodimer. It depends on pyridoxal 5'-phosphate as a cofactor.

The protein resides in the cytoplasm. It catalyses the reaction (S)-4-amino-5-oxopentanoate = 5-aminolevulinate. It participates in porphyrin-containing compound metabolism; protoporphyrin-IX biosynthesis; 5-aminolevulinate from L-glutamyl-tRNA(Glu): step 2/2. The polypeptide is Glutamate-1-semialdehyde 2,1-aminomutase (Methylacidiphilum infernorum (isolate V4) (Methylokorus infernorum (strain V4))).